The following is a 221-amino-acid chain: Endonuclease V (221 aa).

Mg(2+)-binding residues include D44 and D112.

Belongs to the endonuclease V family. Requires Mg(2+) as cofactor.

The protein localises to the cytoplasm. It carries out the reaction Endonucleolytic cleavage at apurinic or apyrimidinic sites to products with a 5'-phosphate.. Its function is as follows. DNA repair enzyme involved in the repair of deaminated bases. Selectively cleaves double-stranded DNA at the second phosphodiester bond 3' to a deoxyinosine leaving behind the intact lesion on the nicked DNA. In Nostoc punctiforme (strain ATCC 29133 / PCC 73102), this protein is Endonuclease V.